A 437-amino-acid chain; its full sequence is Adenosylhomocysteinase (437 aa).

Residues Thr-54, Asp-130, and Glu-155 each coordinate substrate. An NAD(+)-binding site is contributed by 156-158 (TTT). Substrate is bound by residues Lys-185 and Asp-189. NAD(+) contacts are provided by residues Asn-190, 219 to 224 (GYGDVG), Glu-242, Asn-277, 298 to 300 (IGH), and Asn-345.

The protein belongs to the adenosylhomocysteinase family. Homotetramer. The cofactor is NAD(+).

It localises to the cytoplasm. The catalysed reaction is S-adenosyl-L-homocysteine + H2O = L-homocysteine + adenosine. It participates in amino-acid biosynthesis; L-homocysteine biosynthesis; L-homocysteine from S-adenosyl-L-homocysteine: step 1/1. In terms of biological role, adenosylhomocysteine is a competitive inhibitor of S-adenosyl-L-methionine-dependent methyl transferase reactions; therefore adenosylhomocysteinase may play a key role in the control of methylations via regulation of the intracellular concentration of adenosylhomocysteine. In Leishmania donovani, this protein is Adenosylhomocysteinase.